Here is a 105-residue protein sequence, read N- to C-terminus: uncharacterized protein (105 aa).

The protein resides in the plastid. This is an uncharacterized protein from Euglena longa (Euglenophycean alga).